A 1738-amino-acid chain; its full sequence is MLKRKQSSRVEAQPVTDFGPDESLSDNADILWINKPWVHSLLRICAIISVISVCMNTPMTFEHYPPLQYVTFTLDTLLMFLYTAEMIAKMHIRGIVKGDSSYVKDRWCVFDGFMVFCLWVSLVLQVFEIADIVDQMSPWGMLRIPRPLIMIRAFRIYFRFELPRTRITNILKRSGEQIWSVSIFLLFFLLLYGILGVQMFGTFTYHCVVNDTKPGNVTWNSLAIPDTHCSPELEEGYQCPPGFKCMDLEDLGLSRQELGYSGFNEIGTSIFTVYEAASQEGWVFLMYRAIDSFPRWRSYFYFITLIFFLAWLVKNVFIAVIIETFAEIRVQFQQMWGSRSSTTSTATTQMFHEDAAGGWQLVAVDVNKPQGRAPACLQKMMRSSVFHMFILSMVTVDVIVAASNYYKGENFRRQYDEFYLAEVAFTVLFDLEALLKIWCLGFTGYISSSLHKFELLLVIGTTLHVYPDLYHSQFTYFQVLRVVRLIKISPALEDFVYKIFGPGKKLGSLVVFTASLLIVMSAISLQMFCFVEELDRFTTFPRAFMSMFQILTQEGWVDVMDQTLNAVGHMWAPVVAIYFILYHLFATLILLSLFVAVILDNLELDEDLKKLKQLKQSEANADTKEKLPLRLRIFEKFPNRPQMVKISKLPSDFTVPKIRESFMKQFIDRQQQDTCCLLRSLPTTSSSSCDHSKRSAIEDNKYIDQKLRKSVFSIRARNLLEKETAVTKILRACTRQRMLSGSFEGQPAKERSILSVQHHIRQERRSLRHGSNSQRISRGKSLETLTQDHSNTVRYRNAQREDSEIKMIQEKKEQAEMKRKVQEEELRENHPYFDKPLFIVGREHRFRNFCRVVVRARFNASKTDPVTGAVKNTKYHQLYDLLGLVTYLDWVMIIVTICSCISMMFESPFRRVMHAPTLQIAEYVFVIFMSIELNLKIMADGLFFTPTAVIRDFGGVMDIFIYLVSLIFLCWMPQNVPAESGAQLLMVLRCLRPLRIFKLVPQMRKVVRELFSGFKEIFLVSILLLTLMLVFASFGVQLFAGKLAKCNDPNIIRREDCNGIFRINVSVSKNLNLKLRPGEKKPGFWVPRVWANPRNFNFDNVGNAMLALFEVLSLKGWVEVRDVIIHRVGPIHGIYIHVFVFLGCMIGLTLFVGVVIANFNENKGTALLTVDQRRWEDLKSRLKIAQPLHLPPRPDNDGFRAKMYDITQHPFFKRTIALLVLAQSVLLSVKWDVEDPVTVPLATMSVVFTFIFVLEVTMKIIAMSPAGFWQSRRNRYDLLVTSLGVVWVVLHFALLNAYTYMMGACVIVFRFFSICGKHVTLKMLLLTVVVSMYKSFFIIVGMFLLLLCYAFAGVVLFGTVKYGENINRHANFSSAGKAITVLFRIVTGEDWNKIMHDCMVQPPFCTPDEFTYWATDCGNYAGALMYFCSFYVIIAYIMLNLLVAIIVENFSLFYSTEEDQLLSYNDLRHFQIIWNMVDDKREGVIPTFRVKFLLRLLRGRLEVDLDKDKLLFKHMCYEMERLHNGGDVTFHDVLSMLSYRSVDIRKSLQLEELLAREQLEYTIEEEVAKQTIRMWLKKCLKRIRAKQQQSCSIIHSLRESQQQELSRFLNPPSIETTQPSEDTNANSQDNSMQPETSSQQQLLSPTLSDRGGSRQDAADAGKPQRKFGQWRLPSAPKPISHSVSSVNLRFGGRTTMKSVVCKMNPMTDAASCGSEVKKWWTRQLTVESDESGDDLLDI.

At 1 to 36 the chain is on the cytoplasmic side; it reads MLKRKQSSRVEAQPVTDFGPDESLSDNADILWINKP. Residues 37-57 traverse the membrane as a helical segment; it reads WVHSLLRICAIISVISVCMNT. Residues 58–65 lie on the Extracellular side of the membrane; it reads PMTFEHYP. Residues 66–90 traverse the membrane as a helical segment; sequence PLQYVTFTLDTLLMFLYTAEMIAKM. Residues 91–106 are Cytoplasmic-facing; it reads HIRGIVKGDSSYVKDR. The helical transmembrane segment at 107 to 129 threads the bilayer; that stretch reads WCVFDGFMVFCLWVSLVLQVFEI. At 130–137 the chain is on the extracellular side; that stretch reads ADIVDQMS. A helical; Voltage-sensor membrane pass occupies residues 138–158; it reads PWGMLRIPRPLIMIRAFRIYF. At 159 to 173 the chain is on the cytoplasmic side; it reads RFELPRTRITNILKR. Residues 174–199 form a helical membrane-spanning segment; it reads SGEQIWSVSIFLLFFLLLYGILGVQM. Topologically, residues 200–269 are extracellular; sequence FGTFTYHCVV…YSGFNEIGTS (70 aa). Intrachain disulfides connect C207-C239 and C229-C245. N210 and N216 each carry an N-linked (GlcNAc...) asparagine glycan. An intramembrane region (pore-forming) is located at residues 270–289; the sequence is IFTVYEAASQEGWVFLMYRA. The Extracellular portion of the chain corresponds to 290–294; the sequence is IDSFP. The helical transmembrane segment at 295 to 322 threads the bilayer; the sequence is RWRSYFYFITLIFFLAWLVKNVFIAVII. The Cytoplasmic portion of the chain corresponds to 323-382; it reads ETFAEIRVQFQQMWGSRSSTTSTATTQMFHEDAAGGWQLVAVDVNKPQGRAPACLQKMMR. The helical transmembrane segment at 383-403 threads the bilayer; the sequence is SSVFHMFILSMVTVDVIVAAS. Topologically, residues 404 to 416 are extracellular; sequence NYYKGENFRRQYD. Residues 417 to 439 traverse the membrane as a helical segment; that stretch reads EFYLAEVAFTVLFDLEALLKIWC. Over 440–447 the chain is Cytoplasmic; that stretch reads LGFTGYIS. Residues 448–468 traverse the membrane as a helical segment; it reads SSLHKFELLLVIGTTLHVYPD. Topologically, residues 469 to 472 are extracellular; it reads LYHS. Residues 473–492 form a helical; Voltage-sensor membrane-spanning segment; the sequence is QFTYFQVLRVVRLIKISPAL. Residues 493 to 502 lie on the Cytoplasmic side of the membrane; the sequence is EDFVYKIFGP. A helical transmembrane segment spans residues 503-530; the sequence is GKKLGSLVVFTASLLIVMSAISLQMFCF. The Extracellular portion of the chain corresponds to 531 to 543; it reads VEELDRFTTFPRA. The pore-forming intramembrane region spans 544–563; sequence FMSMFQILTQEGWVDVMDQT. Residues 564-569 are Extracellular-facing; it reads LNAVGH. The helical transmembrane segment at 570–599 threads the bilayer; the sequence is MWAPVVAIYFILYHLFATLILLSLFVAVIL. Topologically, residues 600-886 are cytoplasmic; it reads DNLELDEDLK…QLYDLLGLVT (287 aa). The tract at residues 762 to 785 is disordered; it reads QERRSLRHGSNSQRISRGKSLETL. The stretch at 795–830 forms a coiled coil; it reads YRNAQREDSEIKMIQEKKEQAEMKRKVQEEELRENH. A helical transmembrane segment spans residues 887–906; sequence YLDWVMIIVTICSCISMMFE. Residues 907 to 915 lie on the Extracellular side of the membrane; that stretch reads SPFRRVMHA. Residues 916-939 traverse the membrane as a helical segment; that stretch reads PTLQIAEYVFVIFMSIELNLKIMA. Residues 940-947 lie on the Cytoplasmic side of the membrane; it reads DGLFFTPT. Residues 948–972 traverse the membrane as a helical segment; sequence AVIRDFGGVMDIFIYLVSLIFLCWM. The Extracellular segment spans residues 973-980; it reads PQNVPAES. The chain crosses the membrane as a helical; Voltage-sensor span at residues 981–1003; that stretch reads GAQLLMVLRCLRPLRIFKLVPQM. Residues 1004–1015 are Cytoplasmic-facing; it reads RKVVRELFSGFK. Residues 1016 to 1039 traverse the membrane as a helical segment; the sequence is EIFLVSILLLTLMLVFASFGVQLF. Topologically, residues 1040 to 1104 are extracellular; it reads AGKLAKCNDP…NFNFDNVGNA (65 aa). Residues C1046 and C1057 are joined by a disulfide bond. N-linked (GlcNAc...) asparagine glycosylation is present at N1064. Residues 1105–1124 constitute an intramembrane region (pore-forming); it reads MLALFEVLSLKGWVEVRDVI. At 1125 to 1129 the chain is on the extracellular side; sequence IHRVG. The helical transmembrane segment at 1130 to 1159 threads the bilayer; that stretch reads PIHGIYIHVFVFLGCMIGLTLFVGVVIANF. Over 1160–1210 the chain is Cytoplasmic; that stretch reads NENKGTALLTVDQRRWEDLKSRLKIAQPLHLPPRPDNDGFRAKMYDITQHP. The chain crosses the membrane as a helical span at residues 1211 to 1227; the sequence is FFKRTIALLVLAQSVLL. Topologically, residues 1228–1236 are extracellular; it reads SVKWDVEDP. Residues 1237–1260 form a helical membrane-spanning segment; sequence VTVPLATMSVVFTFIFVLEVTMKI. Residues 1261-1271 lie on the Cytoplasmic side of the membrane; sequence IAMSPAGFWQS. A helical transmembrane segment spans residues 1272 to 1293; it reads RRNRYDLLVTSLGVVWVVLHFA. Residues 1294–1296 are Extracellular-facing; that stretch reads LLN. The chain crosses the membrane as a helical; Voltage-sensor span at residues 1297–1318; that stretch reads AYTYMMGACVIVFRFFSICGKH. The Cytoplasmic segment spans residues 1319–1331; the sequence is VTLKMLLLTVVVS. A helical transmembrane segment spans residues 1332-1357; the sequence is MYKSFFIIVGMFLLLLCYAFAGVVLF. Topologically, residues 1358–1378 are extracellular; that stretch reads GTVKYGENINRHANFSSAGKA. Residues 1379–1398 constitute an intramembrane region (pore-forming); sequence ITVLFRIVTGEDWNKIMHDC. The Extracellular segment spans residues 1399 to 1420; it reads MVQPPFCTPDEFTYWATDCGNY. An intrachain disulfide couples C1405 to C1417. The chain crosses the membrane as a helical span at residues 1421 to 1447; the sequence is AGALMYFCSFYVIIAYIMLNLLVAIIV. At 1448-1738 the chain is on the cytoplasmic side; sequence ENFSLFYSTE…DESGDDLLDI (291 aa). The interval 1611–1678 is disordered; the sequence is PPSIETTQPS…QWRLPSAPKP (68 aa). Over residues 1613–1632 the composition is skewed to polar residues; sequence SIETTQPSEDTNANSQDNSM. Residues 1633-1648 show a composition bias toward low complexity; sequence QPETSSQQQLLSPTLS.

The protein belongs to the NALCN family. In terms of assembly, found in a complex with NALCN, UNC79, UNC80 and NACL1; these auxiliary subunits are indispensable for the function of NALCN channel. Interacts with UNC80; required for the NALCN activation/inhibition by GPCRs in neurons. Found in a complex with NALCN, UNC79 and UNC80; UNC80 bridges NALCN to UNC79. Interacts with CHRM3. Post-translationally, phosphorylated on tyrosine residues.

The protein localises to the cell membrane. It catalyses the reaction Na(+)(in) = Na(+)(out). With respect to regulation, inhibited by low micromolar concentrations of Gd(3+) and high micromolar concentrations of verapamil. Insensitive to tetrodotoxin (TTX) and potentiated by low external Ca(2+) concentration. Functionally, voltage-gated ion channel responsible for the resting Na(+) permeability that controls neuronal excitability. NALCN channel functions as a multi-protein complex, which consists at least of NALCN, NALF1, UNC79 and UNC80. NALCN is the voltage-sensing, pore-forming subunit of the NALCN channel complex. NALCN channel complex is constitutively active and conducts monovalent cations but is blocked by physiological concentrations of extracellular divalent cations. In addition to its role in regulating neuronal excitability, is required for normal respiratory rhythm, systemic osmoregulation by controlling the serum sodium concentration and in the regulation of the intestinal pace-making activity in the interstitial cells of Cajal. NALCN channel is also activated by neuropeptides such as neurotensin and substance P (SP) through a SRC family kinases-dependent pathway. In addition, NALCN activity is enhanced/modulated by several GPCRs, such as CHRM3. This is Sodium leak channel NALCN from Homo sapiens (Human).